Here is a 217-residue protein sequence, read N- to C-terminus: Adenylate kinase (217 aa).

10 to 15 (GAGKGT) serves as a coordination point for ATP. An NMP region spans residues 30 to 59 (STGDMFRAAMKNETELGLKAKSYMDAGELV). Residues Thr31, Arg36, 57–59 (ELV), 85–88 (GFPR), and Gln92 contribute to the AMP site. The tract at residues 126-163 (GRRVSPTSGRTYHVIFNPPKVEGICDVDGSELIQRDDD) is LID. Residues Arg127 and 136–137 (TY) contribute to the ATP site. Arg160 and Arg171 together coordinate AMP. Residue Gln199 coordinates ATP.

Belongs to the adenylate kinase family. Monomer.

The protein localises to the cytoplasm. The enzyme catalyses AMP + ATP = 2 ADP. It functions in the pathway purine metabolism; AMP biosynthesis via salvage pathway; AMP from ADP: step 1/1. Catalyzes the reversible transfer of the terminal phosphate group between ATP and AMP. Plays an important role in cellular energy homeostasis and in adenine nucleotide metabolism. The protein is Adenylate kinase of Halalkalibacterium halodurans (strain ATCC BAA-125 / DSM 18197 / FERM 7344 / JCM 9153 / C-125) (Bacillus halodurans).